The chain runs to 742 residues: Transcription factor FFUJ_09177 (742 aa).

Residues 15-41 constitute a DNA-binding region (zn(2)-C6 fungal-type); it reads CVSCARSKQRCDGHSPCGRCSLKNLDC. 2 disordered regions span residues 50–80 and 218–244; these read GQNSTRGASPQSPSASRESYSQNTLPVVQSQ and HSLDISSYQGQSNQTSPETTSHSSVRD. Positions 218 to 240 are enriched in polar residues; it reads HSLDISSYQGQSNQTSPETTSHS.

It localises to the nucleus. Functionally, transcription factor; part of the DMATS1 gene cluster that mediates the biosynthesis of a reversely N-prenylated monomeric L-tryptophan (r-N-DMAT). Seems not to regulate the expression of the DMATS1 cluster. The chain is Transcription factor FFUJ_09177 from Gibberella fujikuroi (strain CBS 195.34 / IMI 58289 / NRRL A-6831) (Bakanae and foot rot disease fungus).